A 275-amino-acid polypeptide reads, in one-letter code: Large ribosomal subunit protein uL2 (275 aa).

The tract at residues V223–S260 is disordered.

Belongs to the universal ribosomal protein uL2 family. Part of the 50S ribosomal subunit. Forms a bridge to the 30S subunit in the 70S ribosome.

In terms of biological role, one of the primary rRNA binding proteins. Required for association of the 30S and 50S subunits to form the 70S ribosome, for tRNA binding and peptide bond formation. It has been suggested to have peptidyltransferase activity; this is somewhat controversial. Makes several contacts with the 16S rRNA in the 70S ribosome. In Legionella pneumophila (strain Lens), this protein is Large ribosomal subunit protein uL2.